A 360-amino-acid chain; its full sequence is BOLA class I histocompatibility antigen, alpha chain BL3-6 (360 aa).

An N-terminal signal peptide occupies residues 1-21; the sequence is MGPRALLLLLSGVLILTETRA. The interval 22–111 is alpha-1; sequence GSHSLRYFST…LRGYYNQSEA (90 aa). Residues 22 to 308 lie on the Extracellular side of the membrane; that stretch reads GSHSLRYFST…QPSFLTMGII (287 aa). Residue Asn-107 is glycosylated (N-linked (GlcNAc...) asparagine). The interval 112-203 is alpha-2; it reads GSHTLQWMSG…ENGKDTLLRA (92 aa). Disulfide bonds link Cys-122–Cys-185 and Cys-224–Cys-280. Residues 204–295 are alpha-3; it reads DPPKAHVTHH…GLQEPLTLRW (92 aa). The Ig-like C1-type domain maps to 206–292; it reads PKAHVTHHPI…QHEGLQEPLT (87 aa). Residues 296-308 form a connecting peptide region; it reads EPPQPSFLTMGII. Residues 309-328 traverse the membrane as a helical segment; the sequence is VGLVLLVVTGAVVAGVVICM. Residues 329-360 are Cytoplasmic-facing; it reads KKRSGEKGGNYIQASSSDSAQGSDVSLTVPKV. The segment at 340-360 is disordered; sequence IQASSSDSAQGSDVSLTVPKV. The segment covering 341–354 has biased composition (low complexity); the sequence is QASSSDSAQGSDVS. 2 positions are modified to phosphoserine: Ser-351 and Ser-354.

It belongs to the MHC class I family. As to quaternary structure, heterodimer of an alpha chain and a beta chain (beta-2-microglobulin).

The protein resides in the membrane. In terms of biological role, involved in the presentation of foreign antigens to the immune system. The sequence is that of BOLA class I histocompatibility antigen, alpha chain BL3-6 from Bos taurus (Bovine).